Reading from the N-terminus, the 146-residue chain is D-aminoacyl-tRNA deacylase (146 aa).

Residues 137-138 (GP) carry the Gly-cisPro motif, important for rejection of L-amino acids motif.

The protein belongs to the DTD family. Homodimer.

The protein resides in the cytoplasm. The catalysed reaction is glycyl-tRNA(Ala) + H2O = tRNA(Ala) + glycine + H(+). The enzyme catalyses a D-aminoacyl-tRNA + H2O = a tRNA + a D-alpha-amino acid + H(+). Functionally, an aminoacyl-tRNA editing enzyme that deacylates mischarged D-aminoacyl-tRNAs. Also deacylates mischarged glycyl-tRNA(Ala), protecting cells against glycine mischarging by AlaRS. Acts via tRNA-based rather than protein-based catalysis; rejects L-amino acids rather than detecting D-amino acids in the active site. By recycling D-aminoacyl-tRNA to D-amino acids and free tRNA molecules, this enzyme counteracts the toxicity associated with the formation of D-aminoacyl-tRNA entities in vivo and helps enforce protein L-homochirality. This is D-aminoacyl-tRNA deacylase from Halalkalibacterium halodurans (strain ATCC BAA-125 / DSM 18197 / FERM 7344 / JCM 9153 / C-125) (Bacillus halodurans).